The primary structure comprises 85 residues: uncharacterized protein (85 aa).

The next 2 helical transmembrane spans lie at 16–34 and 50–71; these read WALSLSILYVIGWCLCAYL and LSCIYLPILFIVIGHWIIKIIF.

This sequence to E.coli YhdT.

It localises to the cell membrane. This is an uncharacterized protein from Haemophilus influenzae (strain ATCC 51907 / DSM 11121 / KW20 / Rd).